The sequence spans 340 residues: MIKVAVNGYGTIGKRVASAILAQPDMTLVGVSKTSPNYEAYQAQKMGINLYVTKESLKEFEEAGIKVKGVLEDMIKEADVVVDATPNGVGAQYKQVYSSMGKRALFQGGEKANVADVSFSALCNYDEAVDKRYVRVVSCNTTGLLRTLCTLNRVSKIAKVRGTIVRRAADPKEVKKGPINSLVPDPASIPSHHAKDVNTVLKDLDIVTMAVVAPTTLMHVHLLDVTVSSPVTKEDVLSVLSSTPRILLASGKSKVSSTAEIVEVARDMGRPRNDLYELVVFEDSVSVRGNEVFLMYAVHQESIVVPENVDAIRAVSGFADGRKSIEMTNASMGIGKGYLV.

NAD(+)-binding positions include 11–12 (TI) and G109. A D-glyceraldehyde 3-phosphate-binding site is contributed by 138–140 (SCN). C139 serves as the catalytic Nucleophile. Residue R167 participates in NAD(+) binding. Position 193 to 194 (193 to 194 (HA)) interacts with D-glyceraldehyde 3-phosphate. An NAD(+)-binding site is contributed by Q300.

It belongs to the glyceraldehyde-3-phosphate dehydrogenase family. Homotetramer.

It is found in the cytoplasm. It carries out the reaction D-glyceraldehyde 3-phosphate + phosphate + NADP(+) = (2R)-3-phospho-glyceroyl phosphate + NADPH + H(+). The enzyme catalyses D-glyceraldehyde 3-phosphate + phosphate + NAD(+) = (2R)-3-phospho-glyceroyl phosphate + NADH + H(+). Its pathway is carbohydrate degradation; glycolysis; pyruvate from D-glyceraldehyde 3-phosphate: step 1/5. This Metallosphaera sedula (strain ATCC 51363 / DSM 5348 / JCM 9185 / NBRC 15509 / TH2) protein is Glyceraldehyde-3-phosphate dehydrogenase.